A 2548-amino-acid polypeptide reads, in one-letter code: Unconventional myosin-IXa (2548 aa).

One can recognise a Ras-associating domain in the interval 14–112 (NEHTLRIYPG…YRFLLREKNL (99 aa)). A Myosin motor domain is found at 146–1016 (KDFDDLCSLP…ERQHLQDLLH (871 aa)). The helical transmembrane segment at 175 to 195 (IYTYVGSILIVINPFKFLPIY) threads the bilayer. 239 to 246 (GESGSGKT) is an ATP binding site. Residue S755 is modified to Phosphoserine. The interval 898 to 920 (LSKLMETLGQAEPYFVKCIRSNA) is actin-binding. 5 consecutive IQ domains span residues 1021 to 1041 (RRII…HFLH), 1042 to 1071 (LRQA…QKDA), 1074 to 1103 (MASA…AAIV), 1115 to 1144 (RHMA…KIIL), and 1138 to 1167 (QRKK…QRLR). The neck or regulatory domain stretch occupies residues 1021-1162 (RRIILLQRWF…RARQRFKALK (142 aa)). The tract at residues 1163–2511 (EQRLRETKPE…LKNVKNSPQK (1349 aa)) is tail. Residues 1223 to 1236 (SVDCLKESPNKQQE) show a composition bias toward basic and acidic residues. A disordered region spans residues 1223 to 1250 (SVDCLKESPNKQQERAQSQSGVDLQEDV). S1242 and S1258 each carry phosphoserine. The stretch at 1264-1291 (QKKVGRAKRESRRMRELEQAIFSLELLK) forms a coiled coil. Phosphoserine is present on residues S1299 and S1317. Positions 1299–1386 (SPSEDRRWST…SNETSSAEHL (88 aa)) are disordered. Composition is skewed to low complexity over residues 1324 to 1337 (SESS…LSYE) and 1356 to 1366 (FPSPKISSSPK). At S1364 the chain carries Phosphoserine. The span at 1372 to 1381 (NALSASNETS) shows a compositional bias: polar residues. A coiled-coil region spans residues 1486–1532 (VLKKLEKLNTEKEERQKQLQQQNEKEMMEQIRQQTDILEKERKAFKT). Residues 1804-1836 (YHPTPPLSPELPGSCRKEFKENKEPSPKAKRKR) form a disordered region. The segment covering 1818-1830 (CRKEFKENKEPSP) has biased composition (basic and acidic residues). S1948 is subject to Phosphoserine. 2 consecutive Phorbol-ester/DAG-type zinc fingers follow at residues 1999-2048 (GHIF…TAKC) and 2068-2119 (LTSE…DAES). Positions 2063-2251 (VELSRLTSED…LIVVEQMNKY (189 aa)) constitute a Rho-GAP domain. The residue at position 2294 (S2294) is a Phosphoserine. A coiled-coil region spans residues 2315-2358 (AAMETDITEQQQAAMQQEERVLTEQIENLQKEKEELTFEMLVLE). 2 disordered regions span residues 2359–2383 (PRAS…ENLN) and 2401–2424 (SSLK…KQQD). At S2464 the chain carries Phosphoserine. Residues 2490–2531 (RGTFNPEKGKQKLKNVKNSPQKTKETPEGTVMSGRRKTVDPD) are disordered.

It belongs to the TRAFAC class myosin-kinesin ATPase superfamily. Myosin family. Post-translationally, phosphorylated by ALPK1 following monosodium urate monohydrate (MSU)-induced inflammation. Found to be expressed in testis and placenta and at lower levels in all the examined tissues with the exception of liver. Isoform 5: Found in leukocytes but not in brain, retina or testis.

It is found in the membrane. The protein resides in the cytoplasm. It localises to the synapse. Its subcellular location is the cell projection. The protein localises to the growth cone. In terms of biological role, myosins are actin-based motor molecules with ATPase activity. Unconventional myosins serve in intracellular movements. Regulates Rho by stimulating it's GTPase activity in neurons. Required for the regulation of neurite branching and motor neuron axon guidance. The protein is Unconventional myosin-IXa (MYO9A) of Homo sapiens (Human).